The sequence spans 197 residues: MYTLIKLTSEYTSRAISFTSRNFVASEPTSIALKLTTCDFTTSFQNIMKQCVDYGHSFAFVDADDNIKAQILNIPYDAYENMHYGNIRETDPMFDLFGNLDSYTPDDKCLYVFAIGSEVTGKGLATKLLKKTIEESSSHGFKYIYGDCTNIISQNMFEKHGFETVGSVKYKGYQYGITKPFDSINCTEYIKRMVKTI.

Position 22 (N22) interacts with acetyl-CoA. The active site involves E27. In terms of domain architecture, N-acetyltransferase spans 102–182 (SYTPDDKCLY…YQYGITKPFD (81 aa)). Acetyl-CoA-binding residues include I115, S117, G121, G123, A125, T126, T149, N150, and K159.

This sequence belongs to the acetyltransferase family.

It catalyses the reaction spermine + acetyl-CoA = N(1)-acetylspermine + CoA + H(+). The enzyme catalyses spermidine + acetyl-CoA = N(1)-acetylspermidine + CoA + H(+). The catalysed reaction is spermidine + acetyl-CoA = N(8)-acetylspermidine + CoA + H(+). It carries out the reaction putrescine + acetyl-CoA = N-acetylputrescine + CoA + H(+). It catalyses the reaction cadaverine + acetyl-CoA = N-acetylcadaverine + CoA + H(+). The enzyme catalyses sym-homospermidine + acetyl-CoA = N(1)-acetyl-sym-homospermidine + CoA + H(+). Its function is as follows. Acetylates polyamines such as spermine, spermidine, cadaverine, homospermidine and putrescine (the latter with low efficiency). May play a role in the regulation of polyamine catabolism in the host during viral replication. The sequence is that of Viral polyamine acetyltransferase from Chlorella (PBCV-1).